The following is a 731-amino-acid chain: Autophagy-related protein 20 (731 aa).

A compositionally biased stretch (polar residues) spans 1–22 (MSSVLRNQDNPPTISEVSSTTK). Residues 1–130 (MSSVLRNQDN…NNKSNNVSRV (130 aa)) are disordered. Positions 31 to 41 (KQEEKEKEKEI) are enriched in basic and acidic residues. Positions 69 to 82 (SFMTANSFNEGPNT) are enriched in polar residues. 2 stretches are compositionally biased toward low complexity: residues 92–102 (NNNSSSNNNRG) and 113–128 (LLLY…NNVS). The region spanning 164–340 (IQITEAGNSN…KFLDPNANWG (177 aa)) is the PX domain. A 1,2-diacyl-sn-glycero-3-phospho-(1D-myo-inositol-3-phosphate) is bound by residues R205, S207, and K231. The segment at 253–277 (SVAGSNGNSGGSGGGGASGGAGSGS) is disordered. Gly residues predominate over residues 259–277 (GNSGGSGGGGASGGAGSGS). Residue R306 participates in a 1,2-diacyl-sn-glycero-3-phospho-(1D-myo-inositol-3-phosphate) binding. The interval 586-626 (NSQVKPKNGKYNLEQQQSSTVSPAPPPGPPPSSSSSSSSSS) is disordered. Pro residues predominate over residues 608 to 617 (PAPPPGPPPS).

Belongs to the sorting nexin family.

The protein resides in the endosome membrane. Its subcellular location is the preautophagosomal structure membrane. In terms of biological role, required for cytoplasm to vacuole transport (Cvt), pexophagy and mitophagy. Also involved in endoplasmic reticulum-specific autophagic process and is essential for the survival of cells subjected to severe ER stress. Functions in protein retrieval from the endocytic pathway. The chain is Autophagy-related protein 20 (ATG20) from Candida albicans (strain SC5314 / ATCC MYA-2876) (Yeast).